The following is a 341-amino-acid chain: Probable 2' cyclic ADP-D-ribose synthase TcpO (341 aa).

In terms of domain architecture, TIR spans 204-336 (KEYDIFVSHS…EIIHEILERI (133 aa)). Residues 213–214 (SS) and Lys-243 contribute to the NAD(+) site. Glu-279 is an active-site residue.

The catalysed reaction is NAD(+) + H2O = ADP-D-ribose + nicotinamide + H(+). The enzyme catalyses NAD(+) = 2'cADPR + nicotinamide + H(+). In terms of biological role, NAD(+) hydrolase (NADase) that catalyzes cleavage of NAD(+) into ADP-D-ribose (ADPR) and nicotinamide. In addition to ADPR, also generates a cyclization variant of cyclic ADPR (cADPR), termed v-cADPR (probably 2'cADPR). This chain is Probable 2' cyclic ADP-D-ribose synthase TcpO, found in Methanobrevibacter olleyae.